Consider the following 302-residue polypeptide: MAAARVLLLLSGRPESVSFAQSVCGLLGAGSGLGPWPTHCGLKRGQLVLSDKPFPGASARLPLQRPPFCPFAALDQQPRAPGVELPPKGRGVDLGVAVILQSSDQTVLLTRRTSTLNISPNLWVPPGGHVEPDEELLDGGLRELWEESGLQLPQGQFSWVPLGLWESAYPPKLSWGLPKYHHIVLYLLVISQESQQQLQARIQPNAGEVSAFMWLGPDIAAAVAATEDGTETPKHLPQDLPSSVPTVELKENGGAQPLALPTSTLLRTTPGTADSRERVSTGTKFALTLWLQHLGRKSRDGS.

The Nudix hydrolase domain occupies 89–237 (GRGVDLGVAV…DGTETPKHLP (149 aa)). The short motif at 128–149 (GHVEPDEELLDGGLRELWEESG) is the Nudix box element. Mg(2+)-binding residues include Glu-143 and Glu-147.

This sequence belongs to the Nudix hydrolase family. The cofactor is Mg(2+). Mn(2+) is required as a cofactor.

The enzyme catalyses a 5'-end (N(7)-methyl 5'-triphosphoguanosine)-ribonucleoside in mRNA + H2O = N(7)-methyl-GDP + a 5'-end phospho-ribonucleoside in mRNA + 2 H(+). In terms of biological role, acts as a decapping enzyme capable of hydrolyzing monomethylated capped RNAs (in vitro). Hydrolyzes monomethylated capped RNA after alpha and beta phosphates to form N(7)-methyl-GDP. Shows low activity towards unmethylated capped RNA. This is m7GpppN-mRNA hydrolase NUDT17 (NUDT17) from Bos taurus (Bovine).